A 444-amino-acid chain; its full sequence is Retinoic acid receptor alpha-A (444 aa).

Residues 1-71 (MYESVDVNPF…PPSPPPPPRI (71 aa)) form a modulating region. The segment covering 35–46 (SIRHQHWSGSNH) has biased composition (polar residues). Residues 35–67 (SIRHQHWSGSNHSIETQSTSSEEIVPSPPSPPP) are disordered. Low complexity predominate over residues 47–58 (SIETQSTSSEEI). Residues 72-147 (YKPCFVCQDK…VGMSKESVRN (76 aa)) constitute a DNA-binding region (nuclear receptor). 2 consecutive NR C4-type zinc fingers follow at residues 75-95 (CFVC…CEGC) and 111-130 (CHRE…CQYC). Positions 148–169 (DRNKKKKEEKKPECTENYTLSP) are hinge. One can recognise an NR LBD domain in the interval 170 to 404 (DTEQMIDRVR…PLIQEMLENS (235 aa)). The 9aaTAD motif lies at 395 to 403 (PLIQEMLEN). Residues 402–444 (ENSEGLESSSGAQGSRASATTPGSCSPSLSPNSAQSSPPTQSP) form a disordered region.

This sequence belongs to the nuclear hormone receptor family. NR1 subfamily. As to quaternary structure, heterodimer; with an rxr molecule. Binds DNA preferentially as a rar/rxr heterodimer. In terms of tissue distribution, in the embryo, zygotic expression largely overlaps that of rarab, with high levels in hindbrain, lateral mesoderm and tail bud. In the adult, strong expression in brain and muscle, weaker expression in ovary, liver and digestive tract.

The protein localises to the nucleus. In terms of biological role, receptor for retinoic acid. Retinoic acid receptors bind as heterodimers to their target response elements in response to their ligands, all-trans or 9-cis retinoic acid, and regulate gene expression in various biological processes. The rar/rxr heterodimers bind to the retinoic acid response elements (RARE) composed of tandem 5'-AGGTCA-3' sites known as DR1-DR5. Required for hindbrain patterning. This is Retinoic acid receptor alpha-A from Danio rerio (Zebrafish).